A 400-amino-acid chain; its full sequence is Acetate kinase (400 aa).

N10 contributes to the Mg(2+) binding site. K17 lines the ATP pocket. R91 provides a ligand contact to substrate. Catalysis depends on D150, which acts as the Proton donor/acceptor. ATP is bound by residues 210–214 (HLGNG), 285–287 (DCR), and 333–337 (GIGEN). E387 contributes to the Mg(2+) binding site.

This sequence belongs to the acetokinase family. In terms of assembly, homodimer. The cofactor is Mg(2+). It depends on Mn(2+) as a cofactor.

Its subcellular location is the cytoplasm. The enzyme catalyses acetate + ATP = acetyl phosphate + ADP. The protein operates within metabolic intermediate biosynthesis; acetyl-CoA biosynthesis; acetyl-CoA from acetate: step 1/2. Its function is as follows. Catalyzes the formation of acetyl phosphate from acetate and ATP. Can also catalyze the reverse reaction. This Yersinia pestis bv. Antiqua (strain Antiqua) protein is Acetate kinase.